The chain runs to 243 residues: MIKILIPTAKEMKVCQNIAWPKLSAQTKIIIDYFSTLTVSDLEDIYRINTSAARCEAQRWQDFKAKQLTLNPAIKLFNGLMYRNIKRHNLSTSEAQFMENSVFITSALYGIIPAMTLISPHRLDFNTKIKINNNSLKVFWRENYDTFMQSDDIMVSLLSNEFETVFSPKERQKLIHLNFIEDRDGQLKTHSTISKKARGKCLTAMMENNCQTLEHLKQLRFDGFCYDNELSDSKQLTFVKKQT.

Belongs to the UPF0246 family.

The protein is UPF0246 protein SAG2081 of Streptococcus agalactiae serotype V (strain ATCC BAA-611 / 2603 V/R).